A 273-amino-acid chain; its full sequence is MVFYKYSGSGNDFLIVQSFKKKDFSNLAKQVCHRHEGFGADGLVVVLPSKDYDYEWDFYNSDGSKAGMCGNASRCVGLFAYQHAIASKNHVFLAGKREISICIEEPNIIESNLGNYKILDTIPALRCEKFFTNDSVLENIPTFYLIDTGVPHLVGFVKNKEWLNSLNTLELRALRHAFNANINIAFIENKETIFLQTYERGVEDFTLACGTGMAAVFIAARIFYNTPEKAALIPKSSESLELSLKNDEIFYKGAVRYIGMSVLGMSVFENGCF.

Residues Asn11 and Asn60 each contribute to the substrate site. Cys69 functions as the Proton donor in the catalytic mechanism. Residues 70–71 (GN), Asn181, and 199–200 (ER) each bind substrate. Catalysis depends on Cys209, which acts as the Proton acceptor. 210–211 (GT) contributes to the substrate binding site.

It belongs to the diaminopimelate epimerase family. In terms of assembly, homodimer.

It is found in the cytoplasm. It catalyses the reaction (2S,6S)-2,6-diaminopimelate = meso-2,6-diaminopimelate. It functions in the pathway amino-acid biosynthesis; L-lysine biosynthesis via DAP pathway; DL-2,6-diaminopimelate from LL-2,6-diaminopimelate: step 1/1. Functionally, catalyzes the stereoinversion of LL-2,6-diaminopimelate (L,L-DAP) to meso-diaminopimelate (meso-DAP), a precursor of L-lysine and an essential component of the bacterial peptidoglycan. The polypeptide is Diaminopimelate epimerase (Helicobacter pylori (strain Shi470)).